The following is an 817-amino-acid chain: Cargo-transport protein YPP1 (817 aa).

Belongs to the YPP1 family. Interacts with STT4 and ribosomes.

The protein resides in the cytoplasmic granule. The protein localises to the cell membrane. In terms of biological role, involved in endocytosis. The protein is Cargo-transport protein YPP1 (YPP1) of Saccharomyces cerevisiae (strain YJM789) (Baker's yeast).